Reading from the N-terminus, the 635-residue chain is Chaperone protein DnaK (635 aa).

Residue threonine 198 is modified to Phosphothreonine; by autocatalysis. Residues 597–635 form a disordered region; the sequence is LYEQDQANNERHDTPETEKAEGDNVVDAEFQEIDDQDKK. Basic and acidic residues predominate over residues 604 to 618; that stretch reads NNERHDTPETEKAEG. Acidic residues predominate over residues 620–635; the sequence is NVVDAEFQEIDDQDKK.

This sequence belongs to the heat shock protein 70 family.

Functionally, acts as a chaperone. The chain is Chaperone protein DnaK from Zymomonas mobilis subsp. mobilis (strain ATCC 31821 / ZM4 / CP4).